Consider the following 617-residue polypeptide: Autophagy-related protein 20 (617 aa).

The interval 1 to 83 (MWNDEDNNPY…KRKPGGYDSR (83 aa)) is disordered. Low complexity predominate over residues 20–31 (QSSSINPTSPST). Over residues 48–58 (DNEHNHGVIHD) the composition is skewed to basic and acidic residues. Acidic residues predominate over residues 59–68 (DSDDDDEDLT). Positions 89–209 (YENPKLSILI…RFFDPNASWS (121 aa)) constitute a PX domain. A 1,2-diacyl-sn-glycero-3-phospho-(1D-myo-inositol-3-phosphate) contacts are provided by Arg126, Ser128, Lys152, and Arg175. Positions 403–440 (QQDLTTEELSKKRALLDQLEQSEAEARRIENYLSSSQQ) form a coiled coil. Residues 434 to 516 (YLSSSQQISP…SGNSITNKIF (83 aa)) are disordered. A compositionally biased stretch (basic and acidic residues) spans 454–463 (PPSHQRRDGS). A compositionally biased stretch (polar residues) spans 480-500 (DFSSHTPSASQGLPERSTSVP).

Belongs to the sorting nexin family. In terms of assembly, forms a complex with SNX4/ATG24 and ATG17.

The protein resides in the endosome membrane. Its subcellular location is the preautophagosomal structure membrane. Its function is as follows. Required for cytoplasm to vacuole transport (Cvt), pexophagy and mitophagy. Also involved in endoplasmic reticulum-specific autophagic process and is essential for the survival of cells subjected to severe ER stress. Functions in protein retrieval from the endocytic pathway. Required for proper sorting of the v-SNARE protein SNC1. Autophagy is required for proper vegetative growth, asexual/sexual reproduction, and full virulence. Autophagy is particularly involved in the biosynthesis of deoxynivalenol (DON), an important virulence determinant. The polypeptide is Autophagy-related protein 20 (Gibberella zeae (strain ATCC MYA-4620 / CBS 123657 / FGSC 9075 / NRRL 31084 / PH-1) (Wheat head blight fungus)).